The chain runs to 318 residues: Nisin-resistance protein (318 aa).

The chain crosses the membrane as a helical span at residues 7-28 (ILLGLVAVCALFLGIIYLWGYK).

Its subcellular location is the cell membrane. This chain is Nisin-resistance protein (nsr), found in Lactococcus lactis subsp. lactis (Streptococcus lactis).